The chain runs to 234 residues: Golgi SNAP receptor complex member 1 (234 aa).

Over 1–212 (MSETWEALRK…MQKIKTKKQK (212 aa)) the chain is Cytoplasmic. A coiled-coil region spans residues 54 to 121 (VTTEIEGLIE…RDNVDQVLQR (68 aa)). Residues 213-233 (NTMILAGVISACLIFTIFWII) form a helical; Anchor for type IV membrane protein membrane-spanning segment. Position 234 (Asn-234) is a topological domain, vesicular.

Belongs to the GOSR1 family. As to quaternary structure, component of several multiprotein Golgi SNARE complexes.

The protein localises to the golgi apparatus membrane. In terms of biological role, involved in transport from the ER to the Golgi apparatus as well as in intra-Golgi transport. It belongs to a super-family of proteins called t-SNAREs or soluble NSF (N-ethylmaleimide-sensitive factor) attachment protein receptor. Cooperates with ykt-6 for proper expression of Golgi-resident proteins. Required along with ykt-6 for normal embryonic development, seam cell division or differentiation, and ray formation. The sequence is that of Golgi SNAP receptor complex member 1 from Caenorhabditis briggsae.